Consider the following 313-residue polypeptide: tRNA dimethylallyltransferase (313 aa).

11–18 (GPTACGKT) is a binding site for ATP. A substrate-binding site is contributed by 13–18 (TACGKT). Interaction with substrate tRNA regions lie at residues 36–39 (DSAL), 160–164 (QRIGR), and 243–248 (RCVGYR).

The protein belongs to the IPP transferase family. Monomer. It depends on Mg(2+) as a cofactor.

The catalysed reaction is adenosine(37) in tRNA + dimethylallyl diphosphate = N(6)-dimethylallyladenosine(37) in tRNA + diphosphate. Functionally, catalyzes the transfer of a dimethylallyl group onto the adenine at position 37 in tRNAs that read codons beginning with uridine, leading to the formation of N6-(dimethylallyl)adenosine (i(6)A). This Neisseria gonorrhoeae (strain ATCC 700825 / FA 1090) protein is tRNA dimethylallyltransferase.